Here is a 225-residue protein sequence, read N- to C-terminus: Transcription factor HES-7 (225 aa).

The bHLH domain occupies 12-69 (GPKMLKPLVEKRRRDRINRSLEELRLLLLERTRDQNLRNPKLEKAEILEFAVGYLRER). An Orange domain is found at 92–122 (YLSGFRECLLRLAAFAHDASPAARSQLFSAL). The disordered stretch occupies residues 124–225 (GYRRPKPPRP…PPPAFWRPWP (102 aa)). Pro residues-rich tracts occupy residues 140 to 149 (LPAPRPPLDP) and 213 to 225 (PSLPPPAFWRPWP). The WRPW motif signature appears at 221–224 (WRPW).

Transcription repression requires formation of a complex with a corepressor protein of the Groucho/TLE family.

It is found in the nucleus. Its function is as follows. Transcriptional repressor. Represses transcription from both N box- and E box-containing promoters. May with HES1, cooperatively regulate somite formation in the presomitic mesoderm (PSM). May function as a segmentation clock, which is essential for coordinated somite segmentation. The sequence is that of Transcription factor HES-7 (Hes7) from Mus musculus (Mouse).